Consider the following 391-residue polypeptide: Protein-glutamate methylesterase/protein-glutamine glutaminase of group 2 operon (391 aa).

One can recognise a Response regulatory domain in the interval 20 to 138 (RVMIVDDSVV…EPQAADIFKH (119 aa)). The residue at position 71 (Asp71) is a 4-aspartylphosphate. The CheB-type methylesterase domain occupies 196–383 (PTAPRVLLIG…PLNQIGPKVV (188 aa)). Catalysis depends on residues Ser207, His235, and Asp331.

Belongs to the CheB family. Post-translationally, phosphorylated by CheA. Phosphorylation of the N-terminal regulatory domain activates the methylesterase activity.

Its subcellular location is the cytoplasm. It catalyses the reaction [protein]-L-glutamate 5-O-methyl ester + H2O = L-glutamyl-[protein] + methanol + H(+). The catalysed reaction is L-glutaminyl-[protein] + H2O = L-glutamyl-[protein] + NH4(+). Functionally, involved in chemotaxis. Part of a chemotaxis signal transduction system that modulates chemotaxis in response to various stimuli. Catalyzes the demethylation of specific methylglutamate residues introduced into the chemoreceptors (methyl-accepting chemotaxis proteins or MCP) by CheR. Also mediates the irreversible deamidation of specific glutamine residues to glutamic acid. The sequence is that of Protein-glutamate methylesterase/protein-glutamine glutaminase of group 2 operon from Rhodopseudomonas palustris (strain ATCC BAA-98 / CGA009).